A 541-amino-acid chain; its full sequence is Carboxypeptidase Y homolog A (541 aa).

A signal peptide spans 1-17 (MKVATSALLIGAAAAQQ). A propeptide spanning residues 18 to 125 (QQILKFPDSF…KLEQYSLRAK (108 aa)) is cleaved from the precursor. Disulfide bonds link Cys-179–Cys-418, Cys-313–Cys-327, Cys-337–Cys-360, Cys-344–Cys-353, and Cys-382–Cys-388. The N-linked (GlcNAc...) asparagine glycan is linked to Asn-210. The active site involves Ser-266. Asp-457 is a catalytic residue. A glycan (N-linked (GlcNAc...) asparagine) is linked at Asn-505. Residue His-516 is part of the active site.

Belongs to the peptidase S10 family.

The protein resides in the vacuole. The enzyme catalyses Release of a C-terminal amino acid with broad specificity.. Its function is as follows. Vacuolar carboxypeptidase involved in degradation of small peptides. Digests preferentially peptides containing an aliphatic or hydrophobic residue in P1' position, as well as methionine, leucine or phenylalanine in P1 position of ester substrate. This chain is Carboxypeptidase Y homolog A (cpyA), found in Pyrenophora tritici-repentis (strain Pt-1C-BFP) (Wheat tan spot fungus).